Consider the following 362-residue polypeptide: 3-dehydroquinate synthase (362 aa).

NAD(+)-binding positions include 73–78 (DAEAGK), 107–111 (GAATD), 131–132 (TT), Lys144, Lys153, and 171–174 (TLQT). 3 residues coordinate Zn(2+): Glu186, His249, and His265.

Belongs to the sugar phosphate cyclases superfamily. Dehydroquinate synthase family. It depends on NAD(+) as a cofactor. The cofactor is Co(2+). Zn(2+) serves as cofactor.

The protein resides in the cytoplasm. It catalyses the reaction 7-phospho-2-dehydro-3-deoxy-D-arabino-heptonate = 3-dehydroquinate + phosphate. It participates in metabolic intermediate biosynthesis; chorismate biosynthesis; chorismate from D-erythrose 4-phosphate and phosphoenolpyruvate: step 2/7. Functionally, catalyzes the conversion of 3-deoxy-D-arabino-heptulosonate 7-phosphate (DAHP) to dehydroquinate (DHQ). This chain is 3-dehydroquinate synthase, found in Mycobacterium bovis (strain ATCC BAA-935 / AF2122/97).